A 215-amino-acid chain; its full sequence is Protein GrpE (215 aa).

The segment covering 1 to 28 has biased composition (polar residues); it reads MKHTSDTPSNSDMPSDSQATQPNASATG. Residues 1 to 52 form a disordered region; the sequence is MKHTSDTPSNSDMPSDSQATQPNASATGQAAHAYSSQAQRASADAQAVAGDE. Positions 29–52 are enriched in low complexity; that stretch reads QAAHAYSSQAQRASADAQAVAGDE.

It belongs to the GrpE family. In terms of assembly, homodimer.

The protein localises to the cytoplasm. Participates actively in the response to hyperosmotic and heat shock by preventing the aggregation of stress-denatured proteins, in association with DnaK and GrpE. It is the nucleotide exchange factor for DnaK and may function as a thermosensor. Unfolded proteins bind initially to DnaJ; upon interaction with the DnaJ-bound protein, DnaK hydrolyzes its bound ATP, resulting in the formation of a stable complex. GrpE releases ADP from DnaK; ATP binding to DnaK triggers the release of the substrate protein, thus completing the reaction cycle. Several rounds of ATP-dependent interactions between DnaJ, DnaK and GrpE are required for fully efficient folding. The chain is Protein GrpE from Ralstonia pickettii (strain 12J).